Here is a 130-residue protein sequence, read N- to C-terminus: Small ribosomal subunit protein uS11c (130 aa).

Belongs to the universal ribosomal protein uS11 family. Part of the 30S ribosomal subunit.

The protein resides in the plastid. It localises to the chloroplast. The chain is Small ribosomal subunit protein uS11c from Adiantum capillus-veneris (Maidenhair fern).